We begin with the raw amino-acid sequence, 238 residues long: Modulator of macroautophagy TMEM150B (238 aa).

The Cytoplasmic segment spans residues 1–8 (MWNYLSLL). The chain crosses the membrane as a helical span at residues 9 to 29 (PVILFLWAIAGIWIVFAIAVV). N-linked (GlcNAc...) asparagine glycosylation is present at asparagine 30. Residues 30–51 (NGSVDLNEGFPFISICGSYAPQ) lie on the Extracellular side of the membrane. A helical membrane pass occupies residues 52–72 (SCIFGQVLNIGAALTVWICIV). At 73 to 86 (RHHQLRDWGVKTWQ) the chain is on the cytoplasmic side. The helical transmembrane segment at 87–107 (NQLILWSGILCALGTSIVGNF) threads the bilayer. Over 108 to 116 (QDKNQKPTH) the chain is Extracellular. Residues 117-137 (LAGAFLAFILGNLYFWLQFFL) traverse the membrane as a helical segment. At 138–156 (SWWVKGLPQPGPHWIKSLR) the chain is on the cytoplasmic side. A helical transmembrane segment spans residues 157-177 (LSLCSLSTILIVAMIVLHALH). Residues 178 to 186 (MRSASAICE) are Extracellular-facing. A helical membrane pass occupies residues 187–207 (WVVAMLLFMLFGFFAVDFSIL). At 208 to 238 (RGCTLHLHPRLDSSLPQAPSGSPNIQMAQVL) the chain is on the cytoplasmic side.

This sequence belongs to the DRAM/TMEM150 family.

The protein resides in the cell membrane. It is found in the endosome membrane. Its subcellular location is the cytoplasmic vesicle. It localises to the autophagosome membrane. In terms of biological role, modulator of macroautophagy that causes accumulation of autophagosomes under basal conditions and enhances autophagic flux. Represses cell death and promotes long-term clonogenic survival of cells grown in the absence of glucose in a macroautophagy-independent manner. May have some role in extracellular matrix engulfment or growth factor receptor recycling, both of which can modulate cell survival. This Mus musculus (Mouse) protein is Modulator of macroautophagy TMEM150B.